The chain runs to 99 residues: Small integral membrane protein 14 (99 aa).

Residues 1–49 lie on the Lumenal side of the membrane; it reads MAEGGFDPCECVCSHEHAMRRLINLLRQSQSYCTDTECLQELPGPSSDN. A helical transmembrane segment spans residues 50–70; that stretch reads GISITMILMAWMVIAVILFLL. Residues 71 to 99 lie on the Cytoplasmic side of the membrane; it reads RPPNLRGSNLTGKPASPHNGQDPPAPPVD. The tract at residues 78–99 is disordered; the sequence is SNLTGKPASPHNGQDPPAPPVD.

Its subcellular location is the endoplasmic reticulum membrane. The sequence is that of Small integral membrane protein 14 (SMIM14) from Bos taurus (Bovine).